The primary structure comprises 217 residues: C-type lectin domain family 2 member I (217 aa).

At 1–53 (MPDCLETGEKLFVHNMNAQCVQKPEEGNGPLGTGGKIVQGKCFRIISTVSPVK) the chain is on the cytoplasmic side. A helical; Signal-anchor for type II membrane protein membrane pass occupies residues 54–74 (LYCCYGVIMVLTVAVIALSVA). Over 75–217 (LSTKKTEQII…YNLHCQTPPV (143 aa)) the chain is Extracellular. C92 and C103 are oxidised to a cystine. Residues 99-203 (VGNKCFYFSG…SYINRMWICS (105 aa)) form the C-type lectin domain. N-linked (GlcNAc...) asparagine glycosylation is present at N112. A disulfide bridge links C120 with C202.

In terms of tissue distribution, detected in osteoblasts, growth plate chondrocytes and skeletal muscle overlying the bone (at protein level). Detected in spleen, B-cells, dendritic cells, thymus, and in IL2-activated natural killer cells.

The protein resides in the cell membrane. Its function is as follows. Inhibits osteoclast formation. Receptor for KLRB1F. Enhances T-cell activation. Plays a role in splenocyte activation, T-cell responses and IL-2 production. The sequence is that of C-type lectin domain family 2 member I (Clec2i) from Mus musculus (Mouse).